Consider the following 355-residue polypeptide: Protein ATP1B4 (355 aa).

The Nuclear portion of the chain corresponds to 1-108 (MRRQLRSRRA…SLARTGQSWS (108 aa)). Residues 33-77 (ADEEEEAEEEARVMVVPDLEEEEEEEEEKEEEEKEEEDSHSQETD) form a disordered region. A compositionally biased stretch (acidic residues) spans 50 to 68 (DLEEEEEEEEEKEEEEKEE). A helical; Signal-anchor for type II membrane protein transmembrane segment spans residues 109–129 (LILVIYFFFYASLAAVITLCM). Residues 130–355 (YTLFLTISPY…RVIFTLNIET (226 aa)) are Perinuclear space-facing.

It belongs to the X(+)/potassium ATPases subunit beta family. As to quaternary structure, associates with a SMAD7-transcriptional complex. Interacts with SNW1 and TOR1AIP1. Does not associate with known Na,K-ATPase alpha-subunits.

It is found in the nucleus inner membrane. May act as a transcriptional coregulator during muscle development through its interaction with SNW1. Has lost its ancestral function as a Na,K-ATPase beta-subunit. The chain is Protein ATP1B4 (ATP1B4) from Bos taurus (Bovine).